Here is a 1349-residue protein sequence, read N- to C-terminus: ABC multidrug transporter G (1349 aa).

The ABC transporter 1 domain maps to 51–299; that stretch reads RQFLGFLKGS…FEDMGFVCPK (249 aa). Asn144 carries N-linked (GlcNAc...) asparagine glycosylation. Helical transmembrane passes span 407 to 427, 436 to 456, 492 to 512, and 523 to 543; these read LSLIIKVVSAILQALVCGSLF, SIFLRPGALFFPVLYFLLESM, IPVVLVQVSCFCIILYFMAAL, and WIIVIANTLCFMQMFRAVGAL. Residue Asn549 is glycosylated (N-linked (GlcNAc...) asparagine). The next 2 helical transmembrane spans lie at 550–570 and 580–600; these read ASKITGLLSTIFFVYGGYLIP and WIFYLNPGAYAFEALMANEFV. The N-linked (GlcNAc...) asparagine glycan is linked to Asn649. A helical transmembrane segment spans residues 659–679; that stretch reads FGVIIGFWVFFIVLTALGLEL. The 243-residue stretch at 721 to 963 folds into the ABC transporter 2 domain; the sequence is FTWHDLDYHV…VLDYFARHGA (243 aa). 757–764 is a binding site for ATP; that stretch reads GCSGAGKT. The N-linked (GlcNAc...) asparagine glycan is linked to Asn994. The next 6 membrane-spanning stretches (helical) occupy residues 1056–1076, 1085–1105, 1121–1143, 1166–1186, 1193–1213, and 1226–1246; these read VILHVFAALFSGFTFWKIGDG, FAIFNFIFVAPGCINQMQPFF, IYHWLAFIGAQTVSEIPYLILCA, MYLQMIFYEFLYTSIGQGIAA, FAAVMNPVLIGAGLVSFCGVV, and WLYYLDPFTYLVGGLLGEVLW. N-linked (GlcNAc...) asparagine glycosylation is present at Asn1287. Residues 1318 to 1338 form a helical membrane-spanning segment; the sequence is TGITALFCVSSYAMVFLMMKL.

The protein belongs to the ABC transporter superfamily. ABCG family. PDR (TC 3.A.1.205) subfamily.

Its subcellular location is the cell membrane. ABC efflux transporter that seems not to be able to transport azoles, nor rhodamine 6G (R-6G), a known substrate for many ABC transporters. This is ABC multidrug transporter G from Aspergillus fumigatus (strain ATCC MYA-4609 / CBS 101355 / FGSC A1100 / Af293) (Neosartorya fumigata).